The following is a 328-amino-acid chain: GTP cyclohydrolase MptA (328 aa).

It belongs to the GTP cyclohydrolase IV family. Homodimer. Fe(2+) serves as cofactor.

It carries out the reaction GTP + H2O = 7,8-dihydroneopterin 2',3'-cyclic phosphate + formate + diphosphate + H(+). It functions in the pathway cofactor biosynthesis; 5,6,7,8-tetrahydromethanopterin biosynthesis. Converts GTP to 7,8-dihydro-D-neopterin 2',3'-cyclic phosphate, the first intermediate in the biosynthesis of coenzyme methanopterin. The chain is GTP cyclohydrolase MptA from Methanospirillum hungatei JF-1 (strain ATCC 27890 / DSM 864 / NBRC 100397 / JF-1).